The primary structure comprises 541 residues: Protein wntless homolog (541 aa).

Topologically, residues 1–15 are cytoplasmic; that stretch reads MAGAIIENMGTKKLC. Residues 16–36 form a helical membrane-spanning segment; the sequence is IVGGILLVFQIIAFLVGGLIA. The Lumenal portion of the chain corresponds to 37–232; that stretch reads PGPTTAVSYM…GIHQNGGFTK (196 aa). The segment at 101-232 is interaction with Wnt proteins; sequence MEMSPWFQFM…GIHQNGGFTK (132 aa). The chain crosses the membrane as a helical span at residues 233–253; the sequence is VWFAMKTFLTPSIFIIMVWYW. At 254–268 the chain is on the cytoplasmic side; that stretch reads RRITMMSRPPVLLEK. A helical transmembrane segment spans residues 269 to 289; sequence VIFALGISMTFINIPVEWFSI. Over 290-303 the chain is Lumenal; that stretch reads GFDWTWMLLFGDIR. Residues 304-324 form a helical membrane-spanning segment; that stretch reads QGIFYAMLLSFWIIFCGEHMM. The Cytoplasmic portion of the chain corresponds to 325–331; it reads DQHERNH. A helical membrane pass occupies residues 332–352; sequence IAGYWKQVGPIAVGSFCLFIF. The Lumenal segment spans residues 353–380; sequence DMCERGVQLTNPFYSIWTTDIGTELAMA. The chain crosses the membrane as a helical span at residues 381-401; sequence FIIVAGICLCLYFLFLCFMVF. The Cytoplasmic portion of the chain corresponds to 402-431; sequence QVFRNISGKQSSLPAMSKVRRLHYEGLIFR. Residues 432-452 traverse the membrane as a helical segment; sequence FKFLMLITLACAAMTVIFFIV. The Lumenal portion of the chain corresponds to 453-471; the sequence is SQVTEGHWKWGGVTVQVNS. The chain crosses the membrane as a helical span at residues 472–492; the sequence is AFFTGIYGMWNLYVFALMFLY. Residues 493–541 lie on the Cytoplasmic side of the membrane; sequence APSHKNYGEDQSNGDLGVHSGEELQLTTTITHVDGPTEIYKLTRKEAQE.

This sequence belongs to the wntless family. As to quaternary structure, interacts with WNT3A. Interacts with WNT1, WNT3 and WNT5A.

It localises to the golgi apparatus membrane. The protein resides in the cytoplasmic vesicle membrane. The protein localises to the cell membrane. It is found in the endoplasmic reticulum membrane. Its subcellular location is the early endosome membrane. Functionally, regulates Wnt proteins sorting and secretion in a feedback regulatory mechanism. This reciprocal interaction plays a key role in the regulation of expression, subcellular location, binding and organelle-specific association of Wnt proteins. Also plays an important role in establishment of the anterior-posterior body axis formation during development. In Pongo abelii (Sumatran orangutan), this protein is Protein wntless homolog (WLS).